The sequence spans 460 residues: Serine incorporator 5 (460 aa).

At 1 to 36 (MCTPCCVSQLACCCGSAACSLCCGCCPKIKQSTSTR) the chain is on the extracellular side. A helical transmembrane segment spans residues 37–57 (FMYALFFMLVTVTCVIMMSPT). At 58 to 89 (VEMAMREHIPFYSQMCQQLNAGENCSTLVGYS) the chain is on the cytoplasmic side. Residues 90–110 (AVYKVCFGMACFFFFFAVFTI) form a helical membrane-spanning segment. The Extracellular segment spans residues 111-124 (RVQNSTGCRAAVHN). The N-linked (GlcNAc...) asparagine glycan is linked to asparagine 114. Residues 125–145 (GFWFFKFVALLACCAGGFFLP) form a helical membrane-spanning segment. At 146–156 (NQDQFLEVWRY) the chain is on the cytoplasmic side. The chain crosses the membrane as a helical span at residues 157 to 177 (VGAAGGFLFIIIQLMLLVQFA). Residues 178–197 (HRWNQNWSSGATYNKLWYAA) lie on the Extracellular side of the membrane. Asparagine 183 carries an N-linked (GlcNAc...) asparagine glycan. Residues 198 to 218 (LALVTLVLFSVAVGGMVFMFM) form a helical membrane-spanning segment. Residues 219–230 (YYTHPEACFLNK) lie on the Cytoplasmic side of the membrane. Residues 231-251 (IFLGVNGGLCFIVSLLAISPC) traverse the membrane as a helical segment. Topologically, residues 252-259 (IQTFQPTS) are extracellular. Residues 260 to 280 (GLLQPAVITLYVMYLTFSALA) form a helical membrane-spanning segment. Topologically, residues 281–311 (SKPIEMVEDEIKGNITVCVFPFKSGLKSDTN) are cytoplasmic. The chain crosses the membrane as a helical span at residues 312 to 332 (IVTGVGTAILFCCILYSCLIS). Over 333-391 (TTKRSSAALQVYRNDMPENERARCCFCWVDDTEDYDDEKTSGGQNVKYDERDGTVYSYC) the chain is Extracellular. A helical transmembrane segment spans residues 392-412 (FFHFVFFLGSLYVMMTVTNWF). Residues 413 to 433 (HYDNAKIERLLEGSWSVFWIK) are Cytoplasmic-facing. Residues 434 to 454 (MASSWVCLFFYMWTLVVPMLF) form a helical membrane-spanning segment. The Extracellular segment spans residues 455-460 (PQRFQA).

The protein belongs to the TDE1 family.

The protein resides in the cell membrane. The enzyme catalyses a 1,2-diacyl-sn-glycero-3-phospho-L-serine(in) = a 1,2-diacyl-sn-glycero-3-phospho-L-serine(out). It catalyses the reaction a 1,2-diacyl-sn-glycero-3-phosphocholine(in) = a 1,2-diacyl-sn-glycero-3-phosphocholine(out). It carries out the reaction a 1,2-diacyl-sn-glycero-3-phosphoethanolamine(in) = a 1,2-diacyl-sn-glycero-3-phosphoethanolamine(out). Its function is as follows. Restriction factor required to restrict infectivity of gammaretroviruses: acts by inhibiting an early step of viral infection. Impairs the penetration of the viral particle into the cytoplasm. Non-ATP-dependent, non-specific lipid transporter for phosphatidylserine, phosphatidylcholine, and phosphatidylethanolamine. Functions as a scramblase that flips lipids in both directions across the membrane. Phospholipid scrambling results in gammaretroviral surface exposure of phosphatidylserine and loss of membrane asymmetry, which leads to loss of infectivity. Enhances the incorporation of serine into phosphatidylserine and sphingolipids. The protein is Serine incorporator 5 (serinc5) of Danio rerio (Zebrafish).